The sequence spans 343 residues: Tribbles homolog 2 (343 aa).

A disordered region spans residues 25 to 50 (EELSSIRSAEPSQSFSPNLGSPSPPE). Residues 29–45 (SIRSAEPSQSFSPNLGS) are compositionally biased toward polar residues. The region spanning 61–308 (IGKYLLLEPL…SQEILDHPWF (248 aa)) is the Protein kinase domain.

Belongs to the protein kinase superfamily. CAMK Ser/Thr protein kinase family. Tribbles subfamily.

The protein localises to the cytoplasm. The protein resides in the cytoskeleton. Interacts with MAPK kinases and regulates activation of MAP kinases. Does not display kinase activity. The polypeptide is Tribbles homolog 2 (Mus musculus (Mouse)).